Consider the following 971-residue polypeptide: 116 kDa U5 small nuclear ribonucleoprotein component (971 aa).

The residue at position 1 (Met1) is an N-acetylmethionine. A disordered region spans residues 1–52 (MDTDLYDEFGNYIGPELDSDEDDDELGRETKDLDEDEDEDEDDVGEHEDDHP). Residues 17–47 (LDSDEDDDELGRETKDLDEDEDEDEDDVGEH) are compositionally biased toward acidic residues. At Ser19 the chain carries Phosphoserine. A Glycyl lysine isopeptide (Lys-Gly) (interchain with G-Cter in SUMO1); alternate cross-link involves residue Lys63. A Glycyl lysine isopeptide (Lys-Gly) (interchain with G-Cter in SUMO2); alternate cross-link involves residue Lys63. Thr85 is modified (phosphothreonine). Positions 126–408 (ELIRNVTLCG…GIHLTKEELK (283 aa)) constitute a tr-type G domain. GTP contacts are provided by residues 135–142 (GHLHHGKT), 203–207 (DTPGH), and 257–260 (NKID).

Belongs to the TRAFAC class translation factor GTPase superfamily. Classic translation factor GTPase family. EF-G/EF-2 subfamily. Component of the U5 snRNP and the U4/U6-U5 tri-snRNP complex, a building block of the spliceosome. The U4/U6-U5 tri-snRNP complex is composed of the U4, U6 and U5 snRNAs and at least PRPF3, PRPF4, PRPF6, PRPF8, PRPF31, SNRNP200, TXNL4A, SNRNP40, DDX23, CD2BP2, PPIH, SNU13, EFTUD2, SART1 and USP39. Component of the pre-catalytic, catalytic and post-catalytic spliceosome complexes. Component of the minor spliceosome, which splices U12-type introns. Within this complex, interacts with CRIPT. Interacts with ERBB4 and PRPF8. Interacts with PIH1D1. Interacts with RPAP3 and URI1 in a ZNHIT2-dependent manner. Interacts with NRDE2. Interacts with FAM50A. Interacts with UBL5.

It localises to the nucleus. Required for pre-mRNA splicing as component of the spliceosome, including pre-catalytic, catalytic and post-catalytic spliceosomal complexes. Component of the U5 snRNP and the U4/U6-U5 tri-snRNP complex, a building block of the spliceosome. As a component of the minor spliceosome, involved in the splicing of U12-type introns in pre-mRNAs. This is 116 kDa U5 small nuclear ribonucleoprotein component (Eftud2) from Mus musculus (Mouse).